A 155-amino-acid chain; its full sequence is Aspartate carbamoyltransferase regulatory chain (155 aa).

Positions 113, 118, 139, and 142 each coordinate Zn(2+).

This sequence belongs to the PyrI family. Contains catalytic and regulatory chains. Zn(2+) serves as cofactor.

In terms of biological role, involved in allosteric regulation of aspartate carbamoyltransferase. This Methanoculleus marisnigri (strain ATCC 35101 / DSM 1498 / JR1) protein is Aspartate carbamoyltransferase regulatory chain.